Consider the following 213-residue polypeptide: Methylthioribulose-1-phosphate dehydratase (213 aa).

2 residues coordinate Zn(2+): His-104 and His-106.

The protein belongs to the aldolase class II family. MtnB subfamily. Zn(2+) is required as a cofactor.

The enzyme catalyses 5-(methylsulfanyl)-D-ribulose 1-phosphate = 5-methylsulfanyl-2,3-dioxopentyl phosphate + H2O. It participates in amino-acid biosynthesis; L-methionine biosynthesis via salvage pathway; L-methionine from S-methyl-5-thio-alpha-D-ribose 1-phosphate: step 2/6. Catalyzes the dehydration of methylthioribulose-1-phosphate (MTRu-1-P) into 2,3-diketo-5-methylthiopentyl-1-phosphate (DK-MTP-1-P). The sequence is that of Methylthioribulose-1-phosphate dehydratase from Stenotrophomonas maltophilia (strain K279a).